The chain runs to 621 residues: 5-aminolevulinate synthase, mitochondrial (621 aa).

Positions Asp76–Thr95 are disordered. Arg122 and Ser234 together coordinate substrate. The pyridoxal 5'-phosphate site is built by Ser286, His314, and Thr359. Residue Lys362 is part of the active site. Position 362 is an N6-(pyridoxal phosphate)lysine (Lys362). Pyridoxal 5'-phosphate is bound by residues Thr391 and Thr392. Thr477 contacts substrate.

It belongs to the class-II pyridoxal-phosphate-dependent aminotransferase family. As to quaternary structure, homodimer. The cofactor is pyridoxal 5'-phosphate.

The protein localises to the mitochondrion matrix. The catalysed reaction is succinyl-CoA + glycine + H(+) = 5-aminolevulinate + CO2 + CoA. The protein operates within porphyrin-containing compound metabolism; protoporphyrin-IX biosynthesis; 5-aminolevulinate from glycine: step 1/1. Functionally, catalyzes the synthesis of 5-aminolevulinate (ALA) from succinyl-CoA and glycine, the first and rate-limiting step in heme biosynthesis. The chain is 5-aminolevulinate synthase, mitochondrial (hem1) from Agaricus bisporus (White button mushroom).